The sequence spans 527 residues: Plant-specific TFIIB-related protein PTF2 (527 aa).

Residues M1 to E30 form a TFIIB-type zinc finger.

Can form homodimer. Interacts with TBP2. In terms of tissue distribution, expressed in shoot apical meristems, root tips, primordia of lateral roots, inflorescences, developing pollen grains and embryos.

Its subcellular location is the nucleus. Plant-specific TFIIB-related protein that plays important roles in pollen germination and embryogenesis, possibly by regulating gene expression through interaction with TBP2 and the subunits of RNA polymerases. Binds double-stranded DNA in vitro. The protein is Plant-specific TFIIB-related protein PTF2 of Arabidopsis thaliana (Mouse-ear cress).